The sequence spans 116 residues: NADH-ubiquinone oxidoreductase chain 3 (116 aa).

3 consecutive transmembrane segments (helical) span residues 3 to 23, 56 to 76, and 87 to 107; these read LIMT…TVSF, FFLV…LLPL, and GTFF…IYEW.

Belongs to the complex I subunit 3 family.

Its subcellular location is the mitochondrion membrane. The enzyme catalyses a ubiquinone + NADH + 5 H(+)(in) = a ubiquinol + NAD(+) + 4 H(+)(out). Core subunit of the mitochondrial membrane respiratory chain NADH dehydrogenase (Complex I) that is believed to belong to the minimal assembly required for catalysis. Complex I functions in the transfer of electrons from NADH to the respiratory chain. The immediate electron acceptor for the enzyme is believed to be ubiquinone. The sequence is that of NADH-ubiquinone oxidoreductase chain 3 (MT-ND3) from Carassius auratus (Goldfish).